A 64-amino-acid chain; its full sequence is Prokaryotic ubiquitin-like protein Pup (64 aa).

A compositionally biased stretch (basic and acidic residues) spans 1–11 (MAQEQTKRGGG). The segment at 1-36 (MAQEQTKRGGGGDDDDVTDLGGPAGQERREKLAEDT) is disordered. The segment at 21–58 (GGPAGQERREKLAEDTDDLLDEIDDVLEENAEDFVRAY) is ARC ATPase binding. Positions 24–52 (AGQERREKLAEDTDDLLDEIDDVLEENAE) form a coiled coil. Gln-64 carries the deamidated glutamine modification. Gln-64 is covalently cross-linked (Isoglutamyl lysine isopeptide (Gln-Lys) (interchain with K-? in acceptor proteins)).

The protein belongs to the prokaryotic ubiquitin-like protein family. Strongly interacts with the proteasome-associated ATPase ARC through a hydrophobic interface; the interacting region of Pup lies in its C-terminal half. There is one Pup binding site per ARC hexamer ring. Post-translationally, is modified by deamidation of its C-terminal glutamine to glutamate by the deamidase Dop, a prerequisite to the subsequent pupylation process.

It participates in protein degradation; proteasomal Pup-dependent pathway. Functionally, protein modifier that is covalently attached to lysine residues of substrate proteins, thereby targeting them for proteasomal degradation. The tagging system is termed pupylation. The protein is Prokaryotic ubiquitin-like protein Pup of Mycobacteroides abscessus (strain ATCC 19977 / DSM 44196 / CCUG 20993 / CIP 104536 / JCM 13569 / NCTC 13031 / TMC 1543 / L948) (Mycobacterium abscessus).